A 112-amino-acid polypeptide reads, in one-letter code: Small capsomere-interacting protein (112 aa).

Belongs to the herpesviridae small capsomere-interacting protein family. As to quaternary structure, interacts with the major capsid protein/MCP.

It localises to the virion. The protein resides in the host nucleus. In terms of biological role, participates in the assembly of the infectious particles by decorating the outer surface of the capsid shell and thus forming a layer between the capsid and the tegument. Complexes composed of the major capsid protein and small capsomere-interacting protein/SCP assemble together in the host cytoplasm and are translocated to the nucleus, where they accumulate and participate in capsid assembly. In Homo sapiens (Human), this protein is Small capsomere-interacting protein.